Reading from the N-terminus, the 345-residue chain is Neuropeptide receptor 15 (345 aa).

Residues 1 to 11 (MSVAVGIPYVC) lie on the Extracellular side of the membrane. The helical transmembrane segment at 12–32 (FFIILSVVGIIGNVIVIYAIA) threads the bilayer. Residues 33–40 (GDRNMRKS) are Cytoplasmic-facing. The helical transmembrane segment at 41–61 (VMNILLLNLAVADLANLIFTI) threads the bilayer. Residues 62-90 (PEWIPPVFFGSTDWLFPSFLCPVCRYLEC) lie on the Extracellular side of the membrane. Cysteines 82 and 171 form a disulfide. A helical transmembrane segment spans residues 91–111 (VFLFASISTQMIVCIERYIAI). Residues 112 to 125 (VLPMQARQLCSRRN) are Cytoplasmic-facing. A helical transmembrane segment spans residues 126–146 (VLITVLVDWIFVACFASPYAV). The Extracellular portion of the chain corresponds to 147–187 (WHSVKTKDRNTNSLRFKLFQLSATCSNTVGKSTWWQGYKLT). The helical transmembrane segment at 188-208 (EFLAFYFVPCFIITVVYTKVA) threads the bilayer. At 209 to 246 (KCLWCKDPTLQCETRSCLDNKSSSRSSDALRTRRNVVK) the chain is on the cytoplasmic side. A helical membrane pass occupies residues 247–267 (MLIACVAVYFVCYSPIQVIFL). Over 268–281 (SKAVLNVTIHPPYD) the chain is Extracellular. A helical membrane pass occupies residues 282–304 (FILLMNALAMTCSASNPLLYTLF). At 305-345 (SQKFRRRLRDVLYCPSDVENETKTYYSINNTSIVGPRASFN) the chain is on the cytoplasmic side.

This sequence belongs to the G-protein coupled receptor 1 family. As to expression, expressed in pharyngeal muscle and AWC, ASG, ASE, ASI, and ASJ sensory neurons. Expressed in ASI neuron. Expressed in AFD neurons and in AVK interneuron.

Its subcellular location is the cell membrane. Functionally, probable receptor for neuropeptide ligand nlp-8 that plays a role in octopamine signaling and specifically, the octopamine inhibition of aversion responses in olfactory sensory neurons. Plays a crucial role in daf-7 expression. Acts in concert with gpa-4 to activate TGF-beta-like daf-7 secretion in the ASI neuron, thereby promoting larval development and inhibition of dauer diapause. Suppresses immune response against pathogenic infection by inhibiting transcription regulators elt-2 and hlh-30 in ASJ neuron. Promotes pathogen avoidance behavior via intestinal gon-2, independent of aerotaxis. The protein is Neuropeptide receptor 15 (npr-15) of Caenorhabditis elegans.